A 207-amino-acid chain; its full sequence is Ankyrin repeat-containing protein P1E11.10 (207 aa).

2 ANK repeats span residues 36–65 (NGYT…DINI) and 69–98 (DGET…TVKN).

It is found in the cytoplasm. It localises to the nucleus. This Schizosaccharomyces pombe (strain 972 / ATCC 24843) (Fission yeast) protein is Ankyrin repeat-containing protein P1E11.10.